The chain runs to 376 residues: Na(+)/H(+) antiporter NhaA (376 aa).

Helical transmembrane passes span 8–28, 49–69, 87–107, 117–137, 140–160, 162–182, 209–229, 248–268, 270–290, 321–341, and 349–369; these read FLATEAAGGIILIAAAAAAML, LSLLHWINDALMALFFLLVGL, ILPCIAAAAGMAAPALLYLAF, GWAIPTATDIAFAIGVLALLG, APASLKLFLTTIAIVDDMGAV, IIALAYTAAISGPALLAAIVI, LAVLLSGVHATIAGVLAALAI, PWVAFAIVPLFGFANAGVSFA, IGAEQLLAPLPLGIAAGLFLG, GVALLCGIGFTMSLFIGGLAF, and EVKIGVLGGSILSAIAGYALL.

It belongs to the NhaA Na(+)/H(+) (TC 2.A.33) antiporter family.

It localises to the cell inner membrane. The enzyme catalyses Na(+)(in) + 2 H(+)(out) = Na(+)(out) + 2 H(+)(in). In terms of biological role, na(+)/H(+) antiporter that extrudes sodium in exchange for external protons. This Rhizorhabdus wittichii (strain DSM 6014 / CCUG 31198 / JCM 15750 / NBRC 105917 / EY 4224 / RW1) (Sphingomonas wittichii) protein is Na(+)/H(+) antiporter NhaA.